The sequence spans 209 residues: MATVFSRALGALVLGVACALLAGCASVRPANDLFAGTQDGDATITRYQGRFSARYVQDDAQQSAVGSFLWRERGADVQLELMSPLGQTLAIVSQNRQGATLELPNQPPRRAAEVDTLMQDALGFSLPVSGLRDWLRARPTPGTPARVARDAQSRPETIEQNGWTVHYVAWSDDGDNSTANARVRRLDLDRPQGAGGAPGPLSVRLVLDQ.

Positions 1 to 17 (MATVFSRALGALVLGVA) are cleaved as a signal peptide. Cysteine 18 carries the N-palmitoyl cysteine lipid modification. Cysteine 18 carries S-diacylglycerol cysteine lipidation.

It belongs to the LolB family. In terms of assembly, monomer.

The protein resides in the cell outer membrane. Its function is as follows. Plays a critical role in the incorporation of lipoproteins in the outer membrane after they are released by the LolA protein. The chain is Outer-membrane lipoprotein LolB from Ralstonia nicotianae (strain ATCC BAA-1114 / GMI1000) (Ralstonia solanacearum).